Consider the following 166-residue polypeptide: NAD(P)H-quinone oxidoreductase subunit I, chloroplastic (166 aa).

2 4Fe-4S ferredoxin-type domains span residues 55-84 and 95-124; these read GRIHFEFDKCIACEVCVRVCPIDLPVVDWK and LNYSIDFGICIFCGNCVEYCPTNCLSMTEE. [4Fe-4S] cluster is bound by residues cysteine 64, cysteine 67, cysteine 70, cysteine 74, cysteine 104, cysteine 107, cysteine 110, and cysteine 114.

The protein belongs to the complex I 23 kDa subunit family. As to quaternary structure, NDH is composed of at least 16 different subunits, 5 of which are encoded in the nucleus. [4Fe-4S] cluster serves as cofactor.

The protein resides in the plastid. The protein localises to the chloroplast thylakoid membrane. It carries out the reaction a plastoquinone + NADH + (n+1) H(+)(in) = a plastoquinol + NAD(+) + n H(+)(out). The catalysed reaction is a plastoquinone + NADPH + (n+1) H(+)(in) = a plastoquinol + NADP(+) + n H(+)(out). Functionally, NDH shuttles electrons from NAD(P)H:plastoquinone, via FMN and iron-sulfur (Fe-S) centers, to quinones in the photosynthetic chain and possibly in a chloroplast respiratory chain. The immediate electron acceptor for the enzyme in this species is believed to be plastoquinone. Couples the redox reaction to proton translocation, and thus conserves the redox energy in a proton gradient. This chain is NAD(P)H-quinone oxidoreductase subunit I, chloroplastic, found in Chaetymenia peduncularis (Daisy).